Here is a 216-residue protein sequence, read N- to C-terminus: Somatotropin (216 aa).

The N-terminal stretch at 1–26 is a signal peptide; the sequence is MAAGPRTSMLLAFALLCLPWTQEVGA. His-45 lines the Zn(2+) pocket. Residues Cys-78 and Cys-189 are joined by a disulfide bond. Position 131 is a phosphoserine (Ser-131). Glu-198 contacts Zn(2+). Cysteines 206 and 214 form a disulfide.

This sequence belongs to the somatotropin/prolactin family.

It is found in the secreted. In terms of biological role, plays an important role in growth control. Its major role in stimulating body growth is to stimulate the liver and other tissues to secrete IGF1. It stimulates both the differentiation and proliferation of myoblasts. It also stimulates amino acid uptake and protein synthesis in muscle and other tissues. This Delphinus delphis (Short-beaked common dolphin) protein is Somatotropin (GH1).